Here is a 757-residue protein sequence, read N- to C-terminus: Serine/threonine-protein phosphatase 2A 56 kDa regulatory subunit delta isoform (757 aa).

Basic residues predominate over residues 1 to 11 (MMRGFKQRLIK). Disordered regions lie at residues 1–172 (MMRG…EDHA) and 188–250 (ISNA…NPDT). Positions 12–21 (KTTGSSSSSS) are enriched in low complexity. Positions 23–34 (KKKDKEKEKEKS) are enriched in basic and acidic residues. Composition is skewed to low complexity over residues 35–66 (STTS…GSKS), 86–119 (SSTS…STKK), and 128–147 (QSKQ…SSSS). Over residues 160 to 172 (TKDDKSTSGEDHA) the composition is skewed to basic and acidic residues. The span at 197–216 (SSDVENGNSNNNNMNINTSN) shows a compositional bias: low complexity. A compositionally biased stretch (polar residues) spans 217–228 (TQDANHASSQSI). Phosphothreonine is present on residues T242 and T257. Positions 734–757 (SFNTASENNTLNEENENDCDSEIQ) are disordered. Over residues 746 to 757 (EENENDCDSEIQ) the composition is skewed to acidic residues.

This sequence belongs to the phosphatase 2A regulatory subunit B family. PP2A consists of a common heterodimeric core enzyme, composed of a 36 kDa catalytic subunit (subunit C) and a 65 kDa constant regulatory subunit (PR65 or subunit A), that associates with a variety of regulatory subunits. Proteins that associate with the core dimer include three families of regulatory subunits B (the R2/B/PR55/B55, R3/B''/PR72/PR130/PR59 and R5/B'/B56 families), the 48 kDa variable regulatory subunit, viral proteins, and cell signaling molecules.

The protein resides in the cytoplasm. Its subcellular location is the nucleus. The B regulatory subunit might modulate substrate selectivity and catalytic activity, and might also direct the localization of the catalytic enzyme to a particular subcellular compartment. In terms of biological role, multicopy suppressor of ROX3 and HSP60. The protein is Serine/threonine-protein phosphatase 2A 56 kDa regulatory subunit delta isoform (RTS1) of Saccharomyces cerevisiae (strain ATCC 204508 / S288c) (Baker's yeast).